Reading from the N-terminus, the 743-residue chain is Dystrobrevin alpha (743 aa).

The interaction with MAGEE1 stretch occupies residues M1–E288. A ZZ-type zinc finger spans residues F238–S294. C243, C246, C258, C261, C267, C270, H280, and H284 together coordinate Zn(2+). The interval D400–S450 is syntrophin-binding region. A coiled-coil region spans residues D461–Q556. Positions Q556–M575 are disordered. Residues G557 to I569 show a composition bias toward polar residues. S662 carries the phosphoserine modification.

Belongs to the dystrophin family. Dystrobrevin subfamily. As to quaternary structure, interacts with dystrophin, utrophin and the syntrophins SNTA1, SNTB1, SNTB2, SNTG1 and SNTG2. Interacts with MAGEE1. Binds dystrobrevin binding protein 1. Interacts with CTNNAL1. The interaction is required for correct localization of both CTNNAL1 and DTNA. In terms of assembly, does not interact with dystrophin. In terms of processing, phosphorylation of DTN-1 on tyrosine kinase substrate domain present in the C-terminus. In terms of tissue distribution, highly expressed in brain, skeletal and cardiac muscles, and expressed at lower levels in lung, liver and pancreas. Isoform 2 is not expressed in cardiac muscle. Isoform 7 and isoform 8 are only expressed in muscle.

The protein resides in the cytoplasm. It localises to the synapse. The protein localises to the cell membrane. Functionally, may be involved in the formation and stability of synapses as well as being involved in the clustering of nicotinic acetylcholine receptors. The protein is Dystrobrevin alpha of Homo sapiens (Human).